The chain runs to 169 residues: Procalin (169 aa).

The first 18 residues, 1–18, serve as a signal peptide directing secretion; the sequence is MKTFIVITFIGILSYAYA. 3 disulfide bridges follow: cysteine 21–cysteine 125, cysteine 54–cysteine 168, and cysteine 83–cysteine 97.

Belongs to the calycin superfamily. Triabin family. In terms of tissue distribution, expressed in salivary glands.

It localises to the secreted. The chain is Procalin from Hospesneotomae protracta (Western bloodsucking conenose).